Consider the following 492-residue polypeptide: Probable endopolygalacturonase D (492 aa).

Positions 1-16 (MKRSALILSFLPLVFG) are cleaved as a signal peptide. A disulfide bond links C151 and C166. PbH1 repeat units lie at residues 216–238 (GTSV…AYWD), 258–280 (MYNS…EIES), 281–319 (TEHL…DIKE), and 320–341 (SSYF…AVTS). Residue N292 is glycosylated (N-linked (GlcNAc...) asparagine). D334 (proton donor) is an active-site residue. Cysteines 336 and 352 form a disulfide. H356 is a catalytic residue. PbH1 repeat units lie at residues 371–392 (VNGV…RIKT), 400–422 (VYNI…DVQQ), and 434–478 (TNGV…SITG). 2 N-linked (GlcNAc...) asparagine glycosylation sites follow: N407 and N441. Intrachain disulfides connect C461-C466 and C484-C491.

Belongs to the glycosyl hydrolase 28 family.

Its subcellular location is the secreted. It carries out the reaction (1,4-alpha-D-galacturonosyl)n+m + H2O = (1,4-alpha-D-galacturonosyl)n + (1,4-alpha-D-galacturonosyl)m.. Its function is as follows. Involved in maceration and soft-rotting of plant tissue. Hydrolyzes the 1,4-alpha glycosidic bonds of de-esterified pectate in the smooth region of the plant cell wall. The polypeptide is Probable endopolygalacturonase D (pgaD) (Aspergillus oryzae (strain ATCC 42149 / RIB 40) (Yellow koji mold)).